Here is a 180-residue protein sequence, read N- to C-terminus: NADH-quinone oxidoreductase subunit I 1 (180 aa).

4Fe-4S ferredoxin-type domains are found at residues 50–80 and 90–119; these read LSRD…LQKT and EFFR…LTPD. Residues Cys-60, Cys-63, Cys-66, Cys-70, Cys-99, Cys-102, Cys-105, and Cys-109 each coordinate [4Fe-4S] cluster.

The protein belongs to the complex I 23 kDa subunit family. NDH-1 is composed of 14 different subunits. Subunits NuoA, H, J, K, L, M, N constitute the membrane sector of the complex. It depends on [4Fe-4S] cluster as a cofactor.

It is found in the cell inner membrane. It catalyses the reaction a quinone + NADH + 5 H(+)(in) = a quinol + NAD(+) + 4 H(+)(out). In terms of biological role, NDH-1 shuttles electrons from NADH, via FMN and iron-sulfur (Fe-S) centers, to quinones in the respiratory chain. The immediate electron acceptor for the enzyme in this species is believed to be ubiquinone. Couples the redox reaction to proton translocation (for every two electrons transferred, four hydrogen ions are translocated across the cytoplasmic membrane), and thus conserves the redox energy in a proton gradient. The chain is NADH-quinone oxidoreductase subunit I 1 from Nitrosococcus oceani (strain ATCC 19707 / BCRC 17464 / JCM 30415 / NCIMB 11848 / C-107).